A 122-amino-acid polypeptide reads, in one-letter code: MIQPQTHLNVADNSGARKLMCIRIIGASNRRYAHIGDVIVAVIKEAVPHMSLEKSEVVRAVIVRTCKELKRDCGMIIRYDDNAAIVIDQKGNPKGSRVFGAIPEELRQFGFTKILSIAPEVL.

It belongs to the universal ribosomal protein uL14 family. Part of the 50S ribosomal subunit.

The protein localises to the plastid. Its subcellular location is the chloroplast. Functionally, binds to 23S rRNA. In Jasminum nudiflorum (Winter jasmine), this protein is Large ribosomal subunit protein uL14c.